Consider the following 335-residue polypeptide: Glutamyl-tRNA reductase (335 aa).

Substrate contacts are provided by residues 60-63 (TCHR), S110, 115-117 (ETE), and Q121. The active-site Nucleophile is C61. NADP(+) is bound at residue 189 to 194 (GYSEIN).

This sequence belongs to the glutamyl-tRNA reductase family. In terms of assembly, homodimer.

It carries out the reaction (S)-4-amino-5-oxopentanoate + tRNA(Glu) + NADP(+) = L-glutamyl-tRNA(Glu) + NADPH + H(+). The protein operates within porphyrin-containing compound metabolism; protoporphyrin-IX biosynthesis; 5-aminolevulinate from L-glutamyl-tRNA(Glu): step 1/2. In terms of biological role, catalyzes the NADPH-dependent reduction of glutamyl-tRNA(Glu) to glutamate 1-semialdehyde (GSA). In Chlamydia trachomatis serovar D (strain ATCC VR-885 / DSM 19411 / UW-3/Cx), this protein is Glutamyl-tRNA reductase.